Reading from the N-terminus, the 186-residue chain is Archaemetzincin (186 aa).

His136 contacts Zn(2+). Glu137 acts as the Proton acceptor in catalysis. Positions 140, 146, 147, 152, 171, and 174 each coordinate Zn(2+).

This sequence belongs to the peptidase M54 family. Monomer. The cofactor is Zn(2+).

Functionally, probable zinc metalloprotease whose natural substrate is unknown. This chain is Archaemetzincin, found in Thermococcus kodakarensis (strain ATCC BAA-918 / JCM 12380 / KOD1) (Pyrococcus kodakaraensis (strain KOD1)).